Consider the following 122-residue polypeptide: Small ribosomal subunit protein uS13 (122 aa).

The tract at residues 94 to 122 (RGLPVRGQRTKTNARQRKGPRPAIGGRKK) is disordered.

It belongs to the universal ribosomal protein uS13 family. In terms of assembly, part of the 30S ribosomal subunit. Forms a loose heterodimer with protein S19. Forms two bridges to the 50S subunit in the 70S ribosome.

Its function is as follows. Located at the top of the head of the 30S subunit, it contacts several helices of the 16S rRNA. In the 70S ribosome it contacts the 23S rRNA (bridge B1a) and protein L5 of the 50S subunit (bridge B1b), connecting the 2 subunits; these bridges are implicated in subunit movement. Contacts the tRNAs in the A and P-sites. This chain is Small ribosomal subunit protein uS13, found in Rubrobacter xylanophilus (strain DSM 9941 / JCM 11954 / NBRC 16129 / PRD-1).